A 270-amino-acid polypeptide reads, in one-letter code: MSASPSIRPTAGIAPPLLDLRIARKLYGDRTILSDIALQVARGEIVCVVGPSGCGKSTLLRIVAGLDPDFRGSVTLDGSALAGPSARVGVIFQEPRLLPWLSIADNVGFASGARGGRDPSVERLLDEVGLAGVARQLPATLSGGMAQRAAIARGLFGEPDLLLLDEPFSAVDAITRMRLQTLLLDVVHRHRMAAIVVTHDLDEALYLGDRVLMLAPNPGRVDDEIQVDVARPRDRRDPSLAAQRARLIDAFQRFHDRAAGDPAGIPITSA.

The 225-residue stretch at 17 to 241 folds into the ABC transporter domain; the sequence is LLDLRIARKL…PRDRRDPSLA (225 aa). Residue 50–57 coordinates ATP; that stretch reads GPSGCGKS.

This sequence belongs to the ABC transporter superfamily. Aliphatic sulfonates importer (TC 3.A.1.17.2) family. The complex is composed of two ATP-binding proteins (SsuB), two transmembrane proteins (SsuC) and a solute-binding protein (SsuA).

The protein resides in the cell inner membrane. The enzyme catalyses ATP + H2O + aliphatic sulfonate-[sulfonate-binding protein]Side 1 = ADP + phosphate + aliphatic sulfonateSide 2 + [sulfonate-binding protein]Side 1.. In terms of biological role, part of the ABC transporter complex SsuABC involved in aliphatic sulfonates import. Responsible for energy coupling to the transport system. The chain is Aliphatic sulfonates import ATP-binding protein SsuB 2 from Burkholderia cenocepacia (strain HI2424).